A 946-amino-acid polypeptide reads, in one-letter code: Structure-specific endonuclease subunit SLX4 (946 aa).

Over residues 1 to 14 the composition is skewed to pro residues; the sequence is MPASPLPALSPPAS. Disordered regions lie at residues 1 to 35, 54 to 119, 147 to 318, 339 to 399, 416 to 471, 577 to 748, and 765 to 799; these read MPASPLPALSPPASPRRNTSGASALGSRKADIPPD, QHFD…EEAV, PSDE…GGFT, ADSA…AAQL, TKVP…PKHI, FPLL…GSGR, and ALSPTPPRIHNFENSQPLPLYSVSPTRAKKPKADS. Basic and acidic residues predominate over residues 54 to 74; that stretch reads QHFDDDIAGKDQEQSRKKSPE. Basic residues-rich tracts occupy residues 160 to 169 and 182 to 195; these read KAGKPRKPRA and KPKRTRVTKPKAAK. Basic and acidic residues predominate over residues 278–287; sequence AVSRRRDWTP. Residues 453-469 show a composition bias toward basic residues; that stretch reads SKARSKKASTKAAAKPK. Residues 627–636 show a composition bias toward basic and acidic residues; it reads KANDEPDHVM. Residues 707–717 are compositionally biased toward polar residues; it reads KSQSAIATSGS. Positions 722–733 are enriched in basic and acidic residues; that stretch reads KEPKRTKGKEVK.

This sequence belongs to the SLX4 family. As to quaternary structure, forms a heterodimer with SLX1. In terms of processing, phosphorylated in response to DNA damage.

It localises to the nucleus. Regulatory subunit of the SLX1-SLX4 structure-specific endonuclease that resolves DNA secondary structures generated during DNA repair and recombination. Has endonuclease activity towards branched DNA substrates, introducing single-strand cuts in duplex DNA close to junctions with ss-DNA. In Phaeosphaeria nodorum (strain SN15 / ATCC MYA-4574 / FGSC 10173) (Glume blotch fungus), this protein is Structure-specific endonuclease subunit SLX4.